The chain runs to 164 residues: 3-isopropylmalate dehydratase small subunit 1 (164 aa).

It belongs to the LeuD family. LeuD type 2 subfamily. Heterodimer of LeuC and LeuD.

It catalyses the reaction (2R,3S)-3-isopropylmalate = (2S)-2-isopropylmalate. It participates in amino-acid biosynthesis; L-leucine biosynthesis; L-leucine from 3-methyl-2-oxobutanoate: step 2/4. Functionally, catalyzes the isomerization between 2-isopropylmalate and 3-isopropylmalate, via the formation of 2-isopropylmaleate. This chain is 3-isopropylmalate dehydratase small subunit 1 (leuD1), found in Pyrococcus furiosus (strain ATCC 43587 / DSM 3638 / JCM 8422 / Vc1).